We begin with the raw amino-acid sequence, 106 residues long: Urease subunit beta (106 aa).

Belongs to the urease beta subunit family. As to quaternary structure, heterotrimer of UreA (gamma), UreB (beta) and UreC (alpha) subunits. Three heterotrimers associate to form the active enzyme.

The protein localises to the cytoplasm. It catalyses the reaction urea + 2 H2O + H(+) = hydrogencarbonate + 2 NH4(+). The protein operates within nitrogen metabolism; urea degradation; CO(2) and NH(3) from urea (urease route): step 1/1. The sequence is that of Urease subunit beta from Prochlorococcus marinus (strain MIT 9312).